We begin with the raw amino-acid sequence, 200 residues long: NADH-quinone oxidoreductase subunit C (200 aa).

The protein belongs to the complex I 30 kDa subunit family. As to quaternary structure, NDH-1 is composed of 14 different subunits. Subunits NuoB, C, D, E, F, and G constitute the peripheral sector of the complex.

It is found in the cell inner membrane. The enzyme catalyses a quinone + NADH + 5 H(+)(in) = a quinol + NAD(+) + 4 H(+)(out). Functionally, NDH-1 shuttles electrons from NADH, via FMN and iron-sulfur (Fe-S) centers, to quinones in the respiratory chain. The immediate electron acceptor for the enzyme in this species is believed to be ubiquinone. Couples the redox reaction to proton translocation (for every two electrons transferred, four hydrogen ions are translocated across the cytoplasmic membrane), and thus conserves the redox energy in a proton gradient. The sequence is that of NADH-quinone oxidoreductase subunit C from Thiobacillus denitrificans (strain ATCC 25259 / T1).